The sequence spans 430 residues: Trigger factor (430 aa).

Residues 157–242 form the PPIase FKBP-type domain; that stretch reads GDLVALETWS…AVEVSEPVLP (86 aa).

Belongs to the FKBP-type PPIase family. Tig subfamily.

Its subcellular location is the cytoplasm. The enzyme catalyses [protein]-peptidylproline (omega=180) = [protein]-peptidylproline (omega=0). In terms of biological role, involved in protein export. Acts as a chaperone by maintaining the newly synthesized protein in an open conformation. Functions as a peptidyl-prolyl cis-trans isomerase. The chain is Trigger factor from Xanthomonas euvesicatoria pv. vesicatoria (strain 85-10) (Xanthomonas campestris pv. vesicatoria).